The following is a 199-amino-acid chain: Dephospho-CoA kinase (199 aa).

Residues 4 to 199 (VIGLTGGIAS…DNVLQKWNIS (196 aa)) form the DPCK domain. 12-17 (ASGKST) contributes to the ATP binding site.

This sequence belongs to the CoaE family.

It is found in the cytoplasm. It catalyses the reaction 3'-dephospho-CoA + ATP = ADP + CoA + H(+). It functions in the pathway cofactor biosynthesis; coenzyme A biosynthesis; CoA from (R)-pantothenate: step 5/5. Functionally, catalyzes the phosphorylation of the 3'-hydroxyl group of dephosphocoenzyme A to form coenzyme A. This is Dephospho-CoA kinase from Oceanobacillus iheyensis (strain DSM 14371 / CIP 107618 / JCM 11309 / KCTC 3954 / HTE831).